Consider the following 206-residue polypeptide: 2,3-bisphosphoglycerate-dependent phosphoglycerate mutase (206 aa).

Residues 9 to 16 (RHGQSEWN), 22 to 23 (TG), arginine 61, 88 to 91 (ERDY), lysine 99, 115 to 116 (RR), and 159 to 160 (GN) contribute to the substrate site. Histidine 10 serves as the catalytic Tele-phosphohistidine intermediate. Glutamate 88 (proton donor/acceptor) is an active-site residue.

Belongs to the phosphoglycerate mutase family. BPG-dependent PGAM subfamily. As to quaternary structure, homodimer.

The enzyme catalyses (2R)-2-phosphoglycerate = (2R)-3-phosphoglycerate. The protein operates within carbohydrate degradation; glycolysis; pyruvate from D-glyceraldehyde 3-phosphate: step 3/5. Its function is as follows. Catalyzes the interconversion of 2-phosphoglycerate and 3-phosphoglycerate. This chain is 2,3-bisphosphoglycerate-dependent phosphoglycerate mutase, found in Mesorhizobium japonicum (strain LMG 29417 / CECT 9101 / MAFF 303099) (Mesorhizobium loti (strain MAFF 303099)).